An 84-amino-acid polypeptide reads, in one-letter code: Tetrahydromethanopterin S-methyltransferase subunit G (84 aa).

Residues 50–70 (IGILYGLVIGIILSYILPALI) traverse the membrane as a helical segment.

The protein belongs to the MtrG family. In terms of assembly, the complex is composed of 8 subunits; MtrA, MtrB, MtrC, MtrD, MtrE, MtrF, MtrG and MtrH.

The protein resides in the cell membrane. It catalyses the reaction 5-methyl-5,6,7,8-tetrahydromethanopterin + coenzyme M + 2 Na(+)(in) = 5,6,7,8-tetrahydromethanopterin + methyl-coenzyme M + 2 Na(+)(out). It participates in one-carbon metabolism; methanogenesis from CO(2); methyl-coenzyme M from 5,10-methylene-5,6,7,8-tetrahydromethanopterin: step 2/2. Part of a complex that catalyzes the formation of methyl-coenzyme M and tetrahydromethanopterin from coenzyme M and methyl-tetrahydromethanopterin. This is an energy-conserving, sodium-ion translocating step. The polypeptide is Tetrahydromethanopterin S-methyltransferase subunit G (Methanocaldococcus jannaschii (strain ATCC 43067 / DSM 2661 / JAL-1 / JCM 10045 / NBRC 100440) (Methanococcus jannaschii)).